A 369-amino-acid polypeptide reads, in one-letter code: Core-capsid bridging protein (369 aa).

The interval alanine 15–aspartate 50 is disordered. Basic and acidic residues predominate over residues proline 22 to proline 31. The segment covering arginine 32–lysine 41 has biased composition (basic residues). Threonine 85 bears the Phosphothreonine; by host mark. Serine 166 carries the post-translational modification Phosphoserine; by host. Residues proline 307–alanine 342 are disordered. Basic residues predominate over residues arginine 315–glutamine 338.

The protein belongs to the adenoviridae core-capsid bridging protein family. In terms of assembly, monomer. Homodimer. Exists in equilibrium between monomers and dimers in solution. Interacts with the histone-like nucleoprotein; this interactions bridge the virus core to the capsid. Interacts with core protein X; this interactions bridge the virus core to the capsid. Interacts with the endosome lysis protein VI; this interactions bridge the virus core to the capsid. Interacts with the peripentonal hexons. Interacts with host NPM1; this interaction might play a role in virus assembly.

It localises to the virion. The protein resides in the host nucleus. Its subcellular location is the host nucleolus. Its function is as follows. Associates loosely with the viral DNA to form an outer shell around the nucleoprotein-DNA complex and links it with the capsid by binding the endosome lysis protein. Dissociates from the viral genome during entry. Might be involved in nuclear capsid assembly of the viral particles through its association with NPM1/nucleophosmin. The sequence is that of Core-capsid bridging protein from Homo sapiens (Human).